Reading from the N-terminus, the 156-residue chain is E3 ubiquitin-protein ligase RNF181 (156 aa).

An RING-type; atypical zinc finger spans residues 79-120 (CPVCLLEFEEGETVRQLPCEHLFHSACILPWLGKTNSCPLCR).

It belongs to the RNF181 family.

It catalyses the reaction S-ubiquitinyl-[E2 ubiquitin-conjugating enzyme]-L-cysteine + [acceptor protein]-L-lysine = [E2 ubiquitin-conjugating enzyme]-L-cysteine + N(6)-ubiquitinyl-[acceptor protein]-L-lysine.. It functions in the pathway protein modification; protein ubiquitination. In terms of biological role, E3 ubiquitin-protein ligase which accepts ubiquitin from an E2 ubiquitin-conjugating enzyme in the form of a thioester and then directly transfers the ubiquitin to targeted substrates. Catalyzes monoubiquitination of 26S proteasome subunit PSMC2/RPT1. This chain is E3 ubiquitin-protein ligase RNF181 (rnf181), found in Xenopus laevis (African clawed frog).